Here is a 953-residue protein sequence, read N- to C-terminus: UPF0746 protein DDB_G0281301 (953 aa).

Positions 1–10 (MVNNKRKEIE) are enriched in basic and acidic residues. The tract at residues 1–23 (MVNNKRKEIENQENDNNDDNDGL) is disordered. Over residues 11–21 (NQENDNNDDND) the composition is skewed to acidic residues. The SAP domain maps to 35 to 69 (YDSIRSKELQTIAKSLGLPIIGKKQEIYKRIEGYF).

Belongs to the UPF0746 family.

The polypeptide is UPF0746 protein DDB_G0281301 (Dictyostelium discoideum (Social amoeba)).